The primary structure comprises 372 residues: Chorismate synthase (372 aa).

NADP(+) contacts are provided by R48 and R54. FMN contacts are provided by residues 125–127, 238–239, G278, 293–297, and R319; these read RSS, NA, and KPTSS.

It belongs to the chorismate synthase family. As to quaternary structure, homotetramer. FMNH2 is required as a cofactor.

It carries out the reaction 5-O-(1-carboxyvinyl)-3-phosphoshikimate = chorismate + phosphate. The protein operates within metabolic intermediate biosynthesis; chorismate biosynthesis; chorismate from D-erythrose 4-phosphate and phosphoenolpyruvate: step 7/7. In terms of biological role, catalyzes the anti-1,4-elimination of the C-3 phosphate and the C-6 proR hydrogen from 5-enolpyruvylshikimate-3-phosphate (EPSP) to yield chorismate, which is the branch point compound that serves as the starting substrate for the three terminal pathways of aromatic amino acid biosynthesis. This reaction introduces a second double bond into the aromatic ring system. In Xylella fastidiosa (strain 9a5c), this protein is Chorismate synthase.